A 195-amino-acid polypeptide reads, in one-letter code: Phosphoribosylglycinamide formyltransferase (195 aa).

12–14 (GSN) provides a ligand contact to N(1)-(5-phospho-beta-D-ribosyl)glycinamide. (6R)-10-formyltetrahydrofolate contacts are provided by residues K65, 90–93 (MRLI), and N107. The Proton donor role is filled by H109.

It belongs to the GART family.

It catalyses the reaction N(1)-(5-phospho-beta-D-ribosyl)glycinamide + (6R)-10-formyltetrahydrofolate = N(2)-formyl-N(1)-(5-phospho-beta-D-ribosyl)glycinamide + (6S)-5,6,7,8-tetrahydrofolate + H(+). It participates in purine metabolism; IMP biosynthesis via de novo pathway; N(2)-formyl-N(1)-(5-phospho-D-ribosyl)glycinamide from N(1)-(5-phospho-D-ribosyl)glycinamide (10-formyl THF route): step 1/1. Functionally, catalyzes the transfer of a formyl group from 10-formyltetrahydrofolate to 5-phospho-ribosyl-glycinamide (GAR), producing 5-phospho-ribosyl-N-formylglycinamide (FGAR) and tetrahydrofolate. The polypeptide is Phosphoribosylglycinamide formyltransferase (Bacillus subtilis (strain 168)).